Consider the following 200-residue polypeptide: Imidazoleglycerol-phosphate dehydratase (200 aa).

Residues Glu-13, His-39–His-47, His-68–Glu-72, Arg-94, and Arg-116 each bind substrate. Mn(2+) is bound by residues His-39, His-68, His-69, and Glu-72. 4 residues coordinate Mn(2+): Glu-141, His-165, His-166, and Glu-169. Substrate-binding positions include His-165–Lys-173 and Ser-195–Lys-197.

Belongs to the imidazoleglycerol-phosphate dehydratase family. It depends on Mn(2+) as a cofactor.

The protein resides in the cytoplasm. It carries out the reaction D-erythro-1-(imidazol-4-yl)glycerol 3-phosphate = 3-(imidazol-4-yl)-2-oxopropyl phosphate + H2O. Its pathway is amino-acid biosynthesis; L-histidine biosynthesis; L-histidine from 5-phospho-alpha-D-ribose 1-diphosphate: step 6/9. This chain is Imidazoleglycerol-phosphate dehydratase (hisB), found in Lactococcus lactis subsp. lactis (strain IL1403) (Streptococcus lactis).